The sequence spans 93 residues: Phosphoribosyl-ATP pyrophosphatase (93 aa).

This sequence belongs to the PRA-PH family.

The protein resides in the cytoplasm. It catalyses the reaction 1-(5-phospho-beta-D-ribosyl)-ATP + H2O = 1-(5-phospho-beta-D-ribosyl)-5'-AMP + diphosphate + H(+). The protein operates within amino-acid biosynthesis; L-histidine biosynthesis; L-histidine from 5-phospho-alpha-D-ribose 1-diphosphate: step 2/9. This Mycobacterium bovis (strain ATCC BAA-935 / AF2122/97) protein is Phosphoribosyl-ATP pyrophosphatase (hisE).